The primary structure comprises 148 residues: 3-dehydroquinate dehydratase (148 aa).

The Proton acceptor role is filled by Y23. Residues N75, H81, and D88 each contribute to the substrate site. The active-site Proton donor is H101. Substrate is bound by residues 102 to 103 and R112; that span reads LS.

This sequence belongs to the type-II 3-dehydroquinase family. Homododecamer.

The catalysed reaction is 3-dehydroquinate = 3-dehydroshikimate + H2O. It functions in the pathway metabolic intermediate biosynthesis; chorismate biosynthesis; chorismate from D-erythrose 4-phosphate and phosphoenolpyruvate: step 3/7. Catalyzes a trans-dehydration via an enolate intermediate. The sequence is that of 3-dehydroquinate dehydratase from Xylella fastidiosa (strain 9a5c).